The primary structure comprises 407 residues: Chorismate synthase (407 aa).

NADP(+)-binding residues include R40 and R46. Residues 140 to 142 (RSS), 261 to 262 (QA), G305, 320 to 324 (KPIST), and R346 contribute to the FMN site.

It belongs to the chorismate synthase family. As to quaternary structure, homotetramer. It depends on FMNH2 as a cofactor.

It catalyses the reaction 5-O-(1-carboxyvinyl)-3-phosphoshikimate = chorismate + phosphate. It functions in the pathway metabolic intermediate biosynthesis; chorismate biosynthesis; chorismate from D-erythrose 4-phosphate and phosphoenolpyruvate: step 7/7. Functionally, catalyzes the anti-1,4-elimination of the C-3 phosphate and the C-6 proR hydrogen from 5-enolpyruvylshikimate-3-phosphate (EPSP) to yield chorismate, which is the branch point compound that serves as the starting substrate for the three terminal pathways of aromatic amino acid biosynthesis. This reaction introduces a second double bond into the aromatic ring system. The sequence is that of Chorismate synthase from Corynebacterium glutamicum (strain R).